Reading from the N-terminus, the 228-residue chain is MLLELISYAGTVSGFLFLTLSIASGLYYISELVEEHTEPTRRFLTRAIYGIILILILLLLLDGFPFKLTLFSIACYIVYYQNLKSFPFISLTSPTFLLSCVCVVLNHYFWFKYFNDTEVPPQFKFDPNYIPRRRASFAEVASFFGICVWFIPFALFVSLSAGDYVLPTTSEQHMAKKNDDITTNNQPKFRKRAVGLARVVINSVRKYIYSLARVFGYEIEPDFDRLAV.

Position 1 (Met1) is a topological domain, cytoplasmic. The chain crosses the membrane as a helical span at residues 2–22 (LLELISYAGTVSGFLFLTLSI). At 23-42 (ASGLYYISELVEEHTEPTRR) the chain is on the lumenal side. A helical membrane pass occupies residues 43 to 59 (FLTRAIYGIILILILLL). Residues 60 to 88 (LLDGFPFKLTLFSIACYIVYYQNLKSFPF) lie on the Cytoplasmic side of the membrane. The chain crosses the membrane as a helical span at residues 89–105 (ISLTSPTFLLSCVCVVL). Topologically, residues 106–142 (NHYFWFKYFNDTEVPPQFKFDPNYIPRRRASFAEVAS) are lumenal. The N-linked (GlcNAc...) asparagine glycan is linked to Asn115. A helical membrane pass occupies residues 143-166 (FFGICVWFIPFALFVSLSAGDYVL). Over 167 to 228 (PTTSEQHMAK…IEPDFDRLAV (62 aa)) the chain is Cytoplasmic.

Belongs to the SVP26 family. In terms of assembly, interacts with itself. Interacts with KTR3, MNN2 and MNN5. In terms of processing, N-glycosylated.

It is found in the golgi apparatus. The protein localises to the cis-Golgi network membrane. Functionally, plays a role in retention of a subset of membrane proteins in the early Golgi compartments. Facilitates endoplasmic reticulum to Golgi transport of mannosyltransferases MNN2 and MNN5. This chain is Protein SVP26 (SVP26), found in Saccharomyces cerevisiae (strain ATCC 204508 / S288c) (Baker's yeast).